The sequence spans 206 residues: Large ribosomal subunit protein uL4 (206 aa).

The disordered stretch occupies residues 42-94 (RRQQGSHKAQGRGDVSRTGSKMYKQKGTGRARHHSARAPQFRGGGQAHGPVVR). Basic residues predominate over residues 64–77 (YKQKGTGRARHHSA).

This sequence belongs to the universal ribosomal protein uL4 family. As to quaternary structure, part of the 50S ribosomal subunit.

Functionally, one of the primary rRNA binding proteins, this protein initially binds near the 5'-end of the 23S rRNA. It is important during the early stages of 50S assembly. It makes multiple contacts with different domains of the 23S rRNA in the assembled 50S subunit and ribosome. In terms of biological role, forms part of the polypeptide exit tunnel. The chain is Large ribosomal subunit protein uL4 from Brucella abortus biovar 1 (strain 9-941).